Reading from the N-terminus, the 92-residue chain is Cell division protein FtsB (92 aa).

At 1–3 (MRL) the chain is on the cytoplasmic side. A helical membrane pass occupies residues 4 to 21 (LILILLSVLVLFQHDFWF). Over 22-92 (GSNGFLDYRQ…VFYHIVKESK (71 aa)) the chain is Periplasmic. The stretch at 28 to 63 (DYRQNAEKIKENQAENEKLSQRNQRINAEIQGLTKG) forms a coiled coil.

This sequence belongs to the FtsB family. In terms of assembly, part of a complex composed of FtsB, FtsL and FtsQ.

Its subcellular location is the cell inner membrane. Functionally, essential cell division protein. May link together the upstream cell division proteins, which are predominantly cytoplasmic, with the downstream cell division proteins, which are predominantly periplasmic. This chain is Cell division protein FtsB, found in Haemophilus influenzae (strain PittEE).